Consider the following 369-residue polypeptide: Cytoplasmic tRNA 2-thiolation protein 1 (369 aa).

Belongs to the TtcA family. CTU1/NCS6/ATPBD3 subfamily.

Its subcellular location is the cytoplasm. It functions in the pathway tRNA modification; 5-methoxycarbonylmethyl-2-thiouridine-tRNA biosynthesis. In terms of biological role, plays a central role in 2-thiolation of mcm(5)S(2)U at tRNA wobble positions of tRNA(Lys), tRNA(Glu) and tRNA(Gln). Directly binds tRNAs and probably acts by catalyzing adenylation of tRNAs, an intermediate required for 2-thiolation. It is unclear whether it acts as a sulfurtransferase that transfers sulfur from thiocarboxylated URM1 onto the uridine of tRNAs at wobble position. Prior mcm(5) tRNA modification by the elongator complex is required for 2-thiolation. May also be involved in protein urmylation. The polypeptide is Cytoplasmic tRNA 2-thiolation protein 1 (Meyerozyma guilliermondii (strain ATCC 6260 / CBS 566 / DSM 6381 / JCM 1539 / NBRC 10279 / NRRL Y-324) (Yeast)).